A 308-amino-acid chain; its full sequence is Glutaminase (308 aa).

The substrate site is built by Ser66, Asn117, Glu161, Asn168, Tyr192, Tyr244, and Val262.

It belongs to the glutaminase family. In terms of assembly, homotetramer.

The catalysed reaction is L-glutamine + H2O = L-glutamate + NH4(+). In Klebsiella pneumoniae (strain 342), this protein is Glutaminase.